The following is a 286-amino-acid chain: MKIDGYTRMAAVVANPIKHSLSPFIHNLAFDLTDENGVYLAWEVESKKLAAIVENVRNLDMYGLNISMPYKGEIIKFMDELSPAAELIGAVNTVVNHSGKIIGHNTDGIGFFNSLKKYDFKIENKQMLVLGGGGAAIALIAQAALSGAKKIVVAARKSASYDPLNEKLAKLSAKTGVEIFLTDLSGADRLQKELNQTDLLVNATSVGMDGASFPLEKSLLLPDRLLVVDAIYKVRETPFLRWAKEQGAQTENGLGMLIGQAAESFYLWTGKEMPVDKITLEMEREV.

Shikimate contacts are provided by residues 20 to 22 (SLS) and Ser67. Lys71 (proton acceptor) is an active-site residue. Shikimate-binding residues include Asn92 and Asp107. Residues 131–135 (GGGGA) and Ala230 contribute to the NADP(+) site. Position 232 (Tyr232) interacts with shikimate. An NADP(+)-binding site is contributed by Gly253.

The protein belongs to the shikimate dehydrogenase family. In terms of assembly, homodimer.

The enzyme catalyses shikimate + NADP(+) = 3-dehydroshikimate + NADPH + H(+). It functions in the pathway metabolic intermediate biosynthesis; chorismate biosynthesis; chorismate from D-erythrose 4-phosphate and phosphoenolpyruvate: step 4/7. Its function is as follows. Involved in the biosynthesis of the chorismate, which leads to the biosynthesis of aromatic amino acids. Catalyzes the reversible NADPH linked reduction of 3-dehydroshikimate (DHSA) to yield shikimate (SA). This Lactococcus lactis subsp. cremoris (strain SK11) protein is Shikimate dehydrogenase (NADP(+)).